The sequence spans 175 residues: Major oleosin NAP-II (175 aa).

Residues 1–47 are polar; that stretch reads RRDQYPRDRDQYSMIGRDRDKYSMIGRDRDQYNMYGRDYSKSRQIAK. 2 repeats span residues 17-26 and 27-36; these read RDRDKYSMIG and RDRDQYNMYG. Residues 48 to 119 are hydrophobic; sequence AVTAVTAGGS…AAITVFSWIY (72 aa). 3 consecutive transmembrane segments (helical) span residues 56–76, 78–98, and 99–119; these read GSLL…LTVA, PLLV…ALLI, and TGFL…SWIY. The tract at residues 151-175 is disordered; sequence AQYYGQQQTGGEDDRDRTRGTQHTT.

The protein belongs to the oleosin family.

It is found in the lipid droplet. It localises to the membrane. In terms of biological role, may have a structural role to stabilize the lipid body during desiccation of the seed by preventing coalescence of the oil. Probably interacts with both lipid and phospholipid moieties of lipid bodies. May also provide recognition signals for specific lipase anchorage in lipolysis during seedling growth. The sequence is that of Major oleosin NAP-II from Brassica napus (Rape).